Here is a 164-residue protein sequence, read N- to C-terminus: D-aminoacyl-tRNA deacylase (164 aa).

TRNA-binding residues include Trp-72 and Phe-89. The Nucleophile role is filled by Thr-90. Positions 104 to 107 match the C-terminal adenosine nucleotide of tRNA motif; the sequence is HLAK. The Gly-cisPro motif, allows the protein to recognize chirality of D-amino acids motif lies at 149 to 150; sequence GP.

This sequence belongs to the DTD family. In terms of assembly, homodimer.

The protein localises to the cytoplasm. The enzyme catalyses glycyl-tRNA(Ala) + H2O = tRNA(Ala) + glycine + H(+). The catalysed reaction is a D-aminoacyl-tRNA + H2O = a tRNA + a D-alpha-amino acid + H(+). It catalyses the reaction D-tyrosyl-tRNA(Tyr) + H2O = D-tyrosine + tRNA(Tyr). Its function is as follows. D-aminoacyl-tRNA deacylase, with no observable activity on tRNAs charged with their cognate L-amino acid. Probably acts by rejecting L-amino acids from its binding site rather than specific recognition of D-amino acids. Catalyzes the hydrolysis of D-tyrosyl-tRNA(Tyr), has no activity on correctly charged L-tyrosyl-tRNA(Tyr). Hydrolyzes correctly charged, achiral, glycyl-tRNA(Gly). Deacylates mischarged D.melanogaster and E.coli glycyl-tRNA(Ala). Probably acts via tRNA-based rather than protein-based catalysis. Acts on tRNAs only when the D-amino acid is either attached to the ribose 3'-OH or transferred to the 3'-OH from the 2'-OH through rapid transesterification. Binds a number of other D-amino acids (D-Arg, D-Glu, D-His, D-Lys, D-Ser), suggesting it may also deacylate other mischarged tRNAs. This Plasmodium falciparum (isolate 3D7) protein is D-aminoacyl-tRNA deacylase.